Consider the following 200-residue polypeptide: dITP/XTP pyrophosphatase (200 aa).

Residue 8-13 (TGNQGK) participates in substrate binding. The active-site Proton acceptor is the aspartate 69. Aspartate 69 lines the Mg(2+) pocket. Substrate contacts are provided by residues serine 70, 154-157 (FGYD), lysine 177, and 182-183 (HR).

This sequence belongs to the HAM1 NTPase family. In terms of assembly, homodimer. The cofactor is Mg(2+).

The enzyme catalyses XTP + H2O = XMP + diphosphate + H(+). The catalysed reaction is dITP + H2O = dIMP + diphosphate + H(+). It carries out the reaction ITP + H2O = IMP + diphosphate + H(+). In terms of biological role, pyrophosphatase that catalyzes the hydrolysis of nucleoside triphosphates to their monophosphate derivatives, with a high preference for the non-canonical purine nucleotides XTP (xanthosine triphosphate), dITP (deoxyinosine triphosphate) and ITP. Seems to function as a house-cleaning enzyme that removes non-canonical purine nucleotides from the nucleotide pool, thus preventing their incorporation into DNA/RNA and avoiding chromosomal lesions. The protein is dITP/XTP pyrophosphatase of Vibrio vulnificus (strain CMCP6).